We begin with the raw amino-acid sequence, 580 residues long: MESQCDYSMYFPAVPLPPRAELAGDPGRYRALPRRNHLYLGETVRFLLVLRCRGSVGAGVGGGAGLASRGAWTELATSLAALASVSAGGALPGCGSAGDQDADPPGGGDPGGGGLFRGCSPLLTHGQGPATSGGATTLPVEEPIVSTDEVIFPLTVSLDRLPPGTPKAKIVVTVWKREVEAPEVRDQGYLRLLQTRSPGETFRGEQSAFKAQVSTLLTLLPPPVLKCRQFTVAGKHLTVLKVLNSSSQEEISIWDIRILPNFNASYLPVMPDGSVLLVDNVCHQSGEVSMGSFCRLPGTSGYFPCPLSALEEHNFLFQLRGGEQPPPGAKEGLEVPLIAVVQWSTPKLPFTQSIYTHYRLPSVRLDRPCFVMTASCESPVRTYERFTVTYTLLNNLQDFLAVRLVWTPEHAQAGKQLCEEERRAMQAALDSIVCHTPLNNLGFSRKGSALTFSVAFQALRTGLFELSQHMKLKLQFTASVSHPPPEARPLSRKSSPSSPAVRDLVERHQASLGRSQSFSHQQPSRSHLMRSGSVMERRAITPPVASPVGRPLYLPPDKAVLSLDKIAKRECKVLVVEPVK.

Disordered stretches follow at residues 95–134 and 480–533; these read GSAG…TSGG and VSHP…RSGS. The span at 105–116 shows a compositional bias: gly residues; sequence PGGGDPGGGGLF. Serine 491 carries the phosphoserine modification. The span at 492–502 shows a compositional bias: low complexity; it reads RKSSPSSPAVR. Over residues 512-525 the composition is skewed to polar residues; that stretch reads LGRSQSFSHQQPSR. Serine 517 carries the post-translational modification Phosphoserine. Threonine 541 is subject to Phosphothreonine. Residue serine 546 is modified to Phosphoserine.

As to quaternary structure, component of the multisubunit TRAPP II complex, which includes at least TRAPPC1, TRAPPC2, TRAPPC2L, TRAPPC3, TRAPPC4, TRAPPC5, TRAPPC6A/B, TRAPPC9, TRAPPC10 and TRAPPC14. TRAPPC9, TRAPPC10 and TRAPPC14 are specific subunits of the TRAPP II complex. Interacts with alpha-tubulin during mitosis. Interacts with RAB3IP (via the N-terminal region); this interaction mediates RAB3IP association with the TRAPP II complex. Interacts with TRAPPC10. Interacts with FBF1.

It localises to the cytoplasm. Its subcellular location is the cytoskeleton. The protein resides in the spindle. It is found in the vesicle. The protein localises to the midbody. In terms of biological role, specific subunit of the TRAPP (transport protein particle) II complex, a highly conserved vesicle tethering complex that functions in late Golgi trafficking as a membrane tether. TRAPPC14 is dispensable for TRAPPII complex integrity but mediates RAB3IP preciliary vesicle trafficking to the mother centriole during ciliogenesis. Modulates YAP1 activity as transcriptional regulator. The protein is Trafficking protein particle complex subunit 14 of Mus musculus (Mouse).